Reading from the N-terminus, the 376-residue chain is Deoxyuridine 5'-triphosphate nucleotidohydrolase (376 aa).

It belongs to the dUTPase family. It depends on Mg(2+) as a cofactor.

The enzyme catalyses dUTP + H2O = dUMP + diphosphate + H(+). Its function is as follows. Involved in nucleotide metabolism: produces dUMP, the immediate precursor of thymidine nucleotides and decreases the intracellular concentration of dUTP to avoid uracil incorporation into viral DNA. The protein is Deoxyuridine 5'-triphosphate nucleotidohydrolase of Human herpesvirus 6B (strain Z29) (HHV-6 variant B).